We begin with the raw amino-acid sequence, 75 residues long: Lipid-anchored plasma membrane protein CPP2 (75 aa).

A disordered region spans residues 1 to 43; it reads MSQQQGYYQQGPPQQGYYQQGPPQQGYYQQGPPQQGYPQQQPV. A run of 3 repeats spans residues 4–13, 14–23, and 24–33. The 3 X 10 AA tandem repeats of Q-Q-G-Y-Y-Q-Q-G-P-P stretch occupies residues 4-33; sequence QQGYYQQGPPQQGYYQQGPPQQGYYQQGPP.

Belongs to the CYSTM1 family. Palmitoylated near the C-terminus.

The protein resides in the cell membrane. This chain is Lipid-anchored plasma membrane protein CPP2, found in Saccharomyces cerevisiae (strain ATCC 204508 / S288c) (Baker's yeast).